A 453-amino-acid polypeptide reads, in one-letter code: Bifunctional protein GlmU (453 aa).

Positions 1 to 227 (MNKLSVVILA…LMEVEGVNNR (227 aa)) are pyrophosphorylase. UDP-N-acetyl-alpha-D-glucosamine contacts are provided by residues 9-12 (LAAG), Lys-23, Gln-74, 79-80 (GT), 101-103 (YGD), Gly-138, Glu-152, Asn-167, and Asn-225. A Mg(2+)-binding site is contributed by Asp-103. Mg(2+) is bound at residue Asn-225. The interval 228-248 (LQLANLERHFQRKQVEKLLLA) is linker. The interval 249–453 (GVTFADPARF…ISNWQRPKRK (205 aa)) is N-acetyltransferase. Residues Arg-331 and Lys-349 each contribute to the UDP-N-acetyl-alpha-D-glucosamine site. The Proton acceptor role is filled by His-361. Residues Tyr-364 and Asn-375 each coordinate UDP-N-acetyl-alpha-D-glucosamine. Residues Ala-378, 384 to 385 (NY), Ser-403, Ala-421, and Arg-438 contribute to the acetyl-CoA site.

In the N-terminal section; belongs to the N-acetylglucosamine-1-phosphate uridyltransferase family. The protein in the C-terminal section; belongs to the transferase hexapeptide repeat family. Homotrimer. It depends on Mg(2+) as a cofactor.

The protein localises to the cytoplasm. It carries out the reaction alpha-D-glucosamine 1-phosphate + acetyl-CoA = N-acetyl-alpha-D-glucosamine 1-phosphate + CoA + H(+). The enzyme catalyses N-acetyl-alpha-D-glucosamine 1-phosphate + UTP + H(+) = UDP-N-acetyl-alpha-D-glucosamine + diphosphate. It functions in the pathway nucleotide-sugar biosynthesis; UDP-N-acetyl-alpha-D-glucosamine biosynthesis; N-acetyl-alpha-D-glucosamine 1-phosphate from alpha-D-glucosamine 6-phosphate (route II): step 2/2. The protein operates within nucleotide-sugar biosynthesis; UDP-N-acetyl-alpha-D-glucosamine biosynthesis; UDP-N-acetyl-alpha-D-glucosamine from N-acetyl-alpha-D-glucosamine 1-phosphate: step 1/1. Its pathway is bacterial outer membrane biogenesis; LPS lipid A biosynthesis. Its function is as follows. Catalyzes the last two sequential reactions in the de novo biosynthetic pathway for UDP-N-acetylglucosamine (UDP-GlcNAc). The C-terminal domain catalyzes the transfer of acetyl group from acetyl coenzyme A to glucosamine-1-phosphate (GlcN-1-P) to produce N-acetylglucosamine-1-phosphate (GlcNAc-1-P), which is converted into UDP-GlcNAc by the transfer of uridine 5-monophosphate (from uridine 5-triphosphate), a reaction catalyzed by the N-terminal domain. The polypeptide is Bifunctional protein GlmU (Histophilus somni (strain 129Pt) (Haemophilus somnus)).